The chain runs to 468 residues: Tumor necrosis factor receptor superfamily member 10A (468 aa).

The N-terminal stretch at 1-23 (MAPPPARVHLGAFLAVTPNPGSA) is a signal peptide. A disordered region spans residues 17–82 (TPNPGSAASG…APGPRPAREA (66 aa)). Over residues 20–34 (PGSAASGTEAAAATP) the composition is skewed to low complexity. Residues 24–239 (ASGTEAAAAT…VHKESGNGHN (216 aa)) lie on the Extracellular side of the membrane. Arg-52 is subject to Omega-N-methylarginine. The span at 63–74 (GPSARARAGRAP) shows a compositional bias: low complexity. TNFR-Cys repeat units follow at residues 107 to 145 (SAAT…PGAC), 147 to 188 (RCTE…NTAC), and 189 to 229 (QCKP…DIEC). Intrachain disulfides connect Cys-132-Cys-145, Cys-148-Cys-164, Cys-167-Cys-180, Cys-170-Cys-188, Cys-190-Cys-204, Cys-207-Cys-221, and Cys-211-Cys-229. Asn-156 carries N-linked (GlcNAc...) asparagine glycosylation. The chain crosses the membrane as a helical span at residues 240 to 262 (IWVILVVTLVVPLLLVAVLIVCC). Topologically, residues 263-468 (CIGSGCGGDP…DGTGSAVSLE (206 aa)) are cytoplasmic. In terms of domain architecture, Death spans 365-448 (MLFFDKFANI…HAREKIQDLL (84 aa)). Phosphoserine is present on residues Ser-424, Ser-463, and Ser-466.

Monomer. Homooligomers and heterooligomers with TNFRSF10B. Three TNFRSF10A molecules interact with the TNFSF10 homotrimer. Can interact with TRADD and RIPK1. Interacts with ARAP1. In the absence of stimulation, interacts with BIRC2, DDX3X and GSK3B. The interaction with BIRC2 and DDX3X is further enhanced upon receptor stimulation and accompanied by DDX3X and BIRC2 cleavage. Interacts with ZDHHC3. Interacts with PTPN6; this interaction enables the inhibition of T-cell receptor signaling via LCK. As to quaternary structure, (Microbial infection) Interacts with HCMV protein UL141; this interaction prevents TNFRSF10A cell surface expression. Palmitoylated. Palmitoylation of TNFRSF10A is required for its association with lipid rafts, oligomerization and function in TRAIL-induced cell death. Palmitoylated by ZDHHC3. In terms of tissue distribution, widely expressed. High levels are found in spleen, peripheral blood leukocytes, small intestine and thymus, but also in K-562 erythroleukemia cells, MCF-7 breast carcinoma cells and activated T-cells.

The protein resides in the cell membrane. The protein localises to the membrane raft. It localises to the cytoplasm. It is found in the cytosol. Receptor for the cytotoxic ligand TNFSF10/TRAIL. The adapter molecule FADD recruits caspase-8 to the activated receptor. The resulting death-inducing signaling complex (DISC) performs caspase-8 proteolytic activation which initiates the subsequent cascade of caspases (aspartate-specific cysteine proteases) mediating apoptosis. Promotes the activation of NF-kappa-B. The sequence is that of Tumor necrosis factor receptor superfamily member 10A (TNFRSF10A) from Homo sapiens (Human).